Reading from the N-terminus, the 193-residue chain is MLDKLKESLRNSPVIKKGEYDYFVNPVTDGIPLTEPELLEEIADEIVRRFNPDPASVDKIVCIEAMGIHHATVLSLKTRIPFVVVRKRRYGLPGEVAVHQMTGYSEGELYINGVDGDDRVMVIDDVVSTGGTLLAVLEALREMEVEVVDVVTVIDKGEGSRVVKERTGFTVRSLVKADVVDGRVTVEDIPDGG.

This sequence belongs to the purine/pyrimidine phosphoribosyltransferase family. Archaeal HPRT subfamily. Homodimer.

Its subcellular location is the cytoplasm. It carries out the reaction IMP + diphosphate = hypoxanthine + 5-phospho-alpha-D-ribose 1-diphosphate. It catalyses the reaction GMP + diphosphate = guanine + 5-phospho-alpha-D-ribose 1-diphosphate. It participates in purine metabolism; IMP biosynthesis via salvage pathway; IMP from hypoxanthine: step 1/1. Catalyzes a salvage reaction resulting in the formation of IMP that is energically less costly than de novo synthesis. Prefers hypoxanthine, has 66% activity with guanine while activity with adenine, xanthine, uracil, orotate, or cytosine is negligible. The sequence is that of Hypoxanthine/guanine phosphoribosyltransferase from Methanothermobacter marburgensis (strain ATCC BAA-927 / DSM 2133 / JCM 14651 / NBRC 100331 / OCM 82 / Marburg) (Methanobacterium thermoautotrophicum).